We begin with the raw amino-acid sequence, 159 residues long: RNA pyrophosphohydrolase (159 aa).

Residues 6 to 149 form the Nudix hydrolase domain; it reads GFRPNVGIIL…KREVYRRALK (144 aa). Positions 38–59 match the Nudix box motif; sequence GGINPDETPEDALYRELNEEVG.

The protein belongs to the Nudix hydrolase family. RppH subfamily. Requires a divalent metal cation as cofactor.

In terms of biological role, accelerates the degradation of transcripts by removing pyrophosphate from the 5'-end of triphosphorylated RNA, leading to a more labile monophosphorylated state that can stimulate subsequent ribonuclease cleavage. This chain is RNA pyrophosphohydrolase, found in Pseudomonas fluorescens (strain SBW25).